An 82-amino-acid chain; its full sequence is MVVIRLARGGSKKRPFYSIVVADSRYARDGRFIEQLGFYNPIARGGEIPLKLNLESLDAWVAKGAQLSDRVKTLAKQARKAA.

It belongs to the bacterial ribosomal protein bS16 family.

The chain is Small ribosomal subunit protein bS16 from Alcanivorax borkumensis (strain ATCC 700651 / DSM 11573 / NCIMB 13689 / SK2).